Consider the following 82-residue polypeptide: Small ribosomal subunit protein bS16 (82 aa).

This sequence belongs to the bacterial ribosomal protein bS16 family.

This is Small ribosomal subunit protein bS16 from Shewanella sp. (strain MR-4).